The sequence spans 448 residues: Glutamyl-tRNA reductase (448 aa).

Residues 49–52, Ser109, 114–116, and Gln120 each bind substrate; these read TCNR and ETQ. The active-site Nucleophile is Cys50. 189 to 194 is an NADP(+) binding site; that stretch reads GAGEMS.

It belongs to the glutamyl-tRNA reductase family. As to quaternary structure, homodimer.

The enzyme catalyses (S)-4-amino-5-oxopentanoate + tRNA(Glu) + NADP(+) = L-glutamyl-tRNA(Glu) + NADPH + H(+). Its pathway is porphyrin-containing compound metabolism; protoporphyrin-IX biosynthesis; 5-aminolevulinate from L-glutamyl-tRNA(Glu): step 1/2. Its function is as follows. Catalyzes the NADPH-dependent reduction of glutamyl-tRNA(Glu) to glutamate 1-semialdehyde (GSA). The chain is Glutamyl-tRNA reductase from Staphylococcus aureus (strain MRSA252).